The sequence spans 308 residues: Ornithine carbamoyltransferase (308 aa).

Carbamoyl phosphate-binding positions include 57-60, glutamine 84, arginine 108, and 135-138; these read STRT and HPCQ. L-ornithine is bound by residues asparagine 166, aspartate 224, and 228–229; that span reads SM. Carbamoyl phosphate contacts are provided by residues 264 to 265 and arginine 292; that span reads CL.

This sequence belongs to the aspartate/ornithine carbamoyltransferase superfamily. OTCase family.

Its subcellular location is the cytoplasm. It carries out the reaction carbamoyl phosphate + L-ornithine = L-citrulline + phosphate + H(+). The protein operates within amino-acid biosynthesis; L-arginine biosynthesis; L-arginine from L-ornithine and carbamoyl phosphate: step 1/3. Its function is as follows. Reversibly catalyzes the transfer of the carbamoyl group from carbamoyl phosphate (CP) to the N(epsilon) atom of ornithine (ORN) to produce L-citrulline. The polypeptide is Ornithine carbamoyltransferase (Ralstonia nicotianae (strain ATCC BAA-1114 / GMI1000) (Ralstonia solanacearum)).